Consider the following 687-residue polypeptide: Pentatricopeptide repeat-containing protein At3g09060 (687 aa).

PPR repeat units lie at residues S42–C76, D77–I107, A113–P147, N148–P182, D183–P217, D218–P253, N254–K288, D289–I323, D324–N358, I359–A392, D393–L427, D428–L462, N463–P497, T498–P532, D533–T567, D568–A602, N603–P637, and D638–P672.

The protein belongs to the PPR family. P subfamily.

The chain is Pentatricopeptide repeat-containing protein At3g09060 from Arabidopsis thaliana (Mouse-ear cress).